A 333-amino-acid chain; its full sequence is Probable cytosolic iron-sulfur protein assembly protein ciao1-B (333 aa).

7 WD repeats span residues 14–53, 59–98, 103–142, 148–187, 192–231, 246–285, and 297–333; these read HPDS…WECK, GHQR…FECL, GHEN…EYEC, SHTQ…WECR, GHTS…GGQE, FHGR…DPDQ, and AHTQ…QSGV.

This sequence belongs to the WD repeat CIA1 family. As to quaternary structure, component of the CIA complex.

Its function is as follows. Key component of the cytosolic iron-sulfur protein assembly (CIA) complex, a multiprotein complex that mediates the incorporation of iron-sulfur cluster into extramitochondrial Fe/S proteins. This Salmo salar (Atlantic salmon) protein is Probable cytosolic iron-sulfur protein assembly protein ciao1-B (ciao1b).